The chain runs to 301 residues: Ribosomal protein L11 methyltransferase (301 aa).

Residues Thr-146, Gly-167, Asp-189, and Asn-237 each contribute to the S-adenosyl-L-methionine site.

This sequence belongs to the methyltransferase superfamily. PrmA family.

It localises to the cytoplasm. The catalysed reaction is L-lysyl-[protein] + 3 S-adenosyl-L-methionine = N(6),N(6),N(6)-trimethyl-L-lysyl-[protein] + 3 S-adenosyl-L-homocysteine + 3 H(+). Methylates ribosomal protein L11. In Prochlorococcus marinus (strain MIT 9313), this protein is Ribosomal protein L11 methyltransferase.